A 379-amino-acid polypeptide reads, in one-letter code: Homoserine O-succinyltransferase (379 aa).

Positions 51–360 constitute an AB hydrolase-1 domain; the sequence is NAVLICHALS…DAPQGHDAFL (310 aa). Serine 157 serves as the catalytic Nucleophile. Residue arginine 227 coordinates substrate. Active-site residues include aspartate 323 and histidine 356. A substrate-binding site is contributed by aspartate 357.

It belongs to the AB hydrolase superfamily. MetX family. Homodimer.

The protein resides in the cytoplasm. The catalysed reaction is L-homoserine + succinyl-CoA = O-succinyl-L-homoserine + CoA. It participates in amino-acid biosynthesis; L-methionine biosynthesis via de novo pathway; O-succinyl-L-homoserine from L-homoserine: step 1/1. Functionally, transfers a succinyl group from succinyl-CoA to L-homoserine, forming succinyl-L-homoserine. In Pseudomonas paraeruginosa (strain DSM 24068 / PA7) (Pseudomonas aeruginosa (strain PA7)), this protein is Homoserine O-succinyltransferase.